The chain runs to 278 residues: Putative phosphoenolpyruvate synthase regulatory protein (278 aa).

ADP is bound at residue 158-165 (GVSRSGKT).

The protein belongs to the pyruvate, phosphate/water dikinase regulatory protein family. PSRP subfamily.

It catalyses the reaction [pyruvate, water dikinase] + ADP = [pyruvate, water dikinase]-phosphate + AMP + H(+). The enzyme catalyses [pyruvate, water dikinase]-phosphate + phosphate + H(+) = [pyruvate, water dikinase] + diphosphate. Bifunctional serine/threonine kinase and phosphorylase involved in the regulation of the phosphoenolpyruvate synthase (PEPS) by catalyzing its phosphorylation/dephosphorylation. In Acinetobacter baumannii (strain AYE), this protein is Putative phosphoenolpyruvate synthase regulatory protein.